Reading from the N-terminus, the 352-residue chain is Threonine synthase (352 aa).

Lys-59 is subject to N6-(pyridoxal phosphate)lysine. Pyridoxal 5'-phosphate is bound by residues Asn-85, 185–189 (GNAGN), and Thr-314.

This sequence belongs to the threonine synthase family. Requires pyridoxal 5'-phosphate as cofactor.

It carries out the reaction O-phospho-L-homoserine + H2O = L-threonine + phosphate. Its pathway is amino-acid biosynthesis; L-threonine biosynthesis; L-threonine from L-aspartate: step 5/5. Catalyzes the gamma-elimination of phosphate from L-phosphohomoserine and the beta-addition of water to produce L-threonine. The protein is Threonine synthase (thrC) of Bacillus subtilis (strain 168).